The primary structure comprises 612 residues: MRMDMYHTKILKAIESEDYISVRRRVLRQLVESLIYEGIITPARIEKEEQILFLIQGLDEDNKSVTYECYGRERITFGRISIDSLIVRVQDGKQEIQSVAQFLEEVFRVVNVEQTKLDSFIHELEQTIFKDTIAQYERCNKLKYTQKSYDELENHLIDGHPYHPSYKARIGFQYRDNFRYGYEFMRPIKLIWIAAHKKNATVGYENEVIYDKILKSEVGERKLEAYKERIHSMGCDPKQYLFIPVHPWQWENFIISNYAEDIQDKGIIYLGESADDYCAQQSMRTLRNVTNPKRPYVKVSLNILNTSTLRTLKPYSVASAPAISNWLSNVVSQDSYLRDESRVILLKEFSSVMYDTNKKATYGSLGCIWRESVHHYLGEQEDAVPFNGLYAKEKDGTPIIDAWLNKYGIENWLRLLIQKAIIPVIHLVVEHGIALESHGQNMILVHKEGLPVRIALKDFHEGLEFYRPFLKEMNKCPDFTKMHKTYANGKMNDFFEMDRIECLQEMVLDALFLFNVGELAFVLADKYEWKEESFWMIVVEEIENHFRKYPHLKDRFESIQLYTPTFYAEQLTKRRLYIDVESLVHEVPNPLYRARQLNIQKSVATGGNYANC.

ATP is bound by residues 282–284, Lys298, Arg310, Tyr390, and Glu461; that span reads SMR.

The protein belongs to the IucA/IucC family. Homodimer.

It catalyses the reaction N(8)-citryl-spermidine + spermidine + ATP = N(8),N'(8)-citryl-bis(spermidine) + AMP + diphosphate + H(+). The enzyme catalyses N(1)-(3,4-dihydroxybenzoyl)-N(8)-citryl-spermidine + spermidine + ATP = N(1)-(3,4-dihydroxybenzoyl)-N(8),N'(8)-citryl-bis(spermidine) + AMP + diphosphate + H(+). Its pathway is siderophore biosynthesis; petrobactin biosynthesis. In terms of biological role, involved in the biosynthesis of petrobactin, a catecholate siderophore that functions in both iron acquisition and virulence. Catalyzes the ATP-dependent condensation of spermidine with N(8)-citryl-spermidine or N(1)-(3,4-dihydroxbenzoyl)-N(8)-citryl-spermidine, two intermediates in petrobactin biosynthesis pathway. This is Citryl-spermidine/3,4-dihydroxybenzoyl-citryl-spermidine:spermidine ligase from Bacillus anthracis.